A 408-amino-acid chain; its full sequence is tRNA pseudouridine synthase D (408 aa).

Residue aspartate 82 is the Nucleophile of the active site. In terms of domain architecture, TRUD spans 157 to 367 (GVPNRFGEQR…MEGERRPLRV (211 aa)).

Belongs to the pseudouridine synthase TruD family.

It carries out the reaction uridine(13) in tRNA = pseudouridine(13) in tRNA. Its function is as follows. Responsible for synthesis of pseudouridine from uracil-13 in transfer RNAs. In Geobacter sulfurreducens (strain ATCC 51573 / DSM 12127 / PCA), this protein is tRNA pseudouridine synthase D.